A 317-amino-acid chain; its full sequence is Terpene synthase 3 (317 aa).

The short motif at 96-101 (DDFYFE) is the DDxx(x)D/E motif element. The short motif at 223–231 (NDMVSFERE) is the NDxxSxxxD/E motif element.

Belongs to the terpene synthase family.

Functionally, terpene synthase that converts its substrate farnesyl diphosphate (FPP) into the sesquiterpene CAS 137235-51-9 as a major product. Is also able to convert FPP into 9-epi-(E)-caryophyllene, alpha-neoclovene, beta-neoclovene, and 3 yet unidentified sesquiterpenes. The sequence is that of Terpene synthase 3 from Dictyostelium purpureum (Slime mold).